Reading from the N-terminus, the 312-residue chain is Serine acetyltransferase 5 (312 aa).

The span at 1–17 (MPPAGELRHQSPSKEKL) shows a compositional bias: basic and acidic residues. A disordered region spans residues 1–25 (MPPAGELRHQSPSKEKLSSVTQSDE).

This sequence belongs to the transferase hexapeptide repeat family. Homomultimer. As to expression, mostly expressed in stems, flowers and siliques. Localized in vascular tissues, particularly in phloem.

It is found in the cytoplasm. It carries out the reaction L-serine + acetyl-CoA = O-acetyl-L-serine + CoA. It functions in the pathway amino-acid biosynthesis; L-cysteine biosynthesis; L-cysteine from L-serine: step 1/2. With respect to regulation, feedback inhibitions by L-Ser and acetyl-CoA. The polypeptide is Serine acetyltransferase 5 (SAT5) (Arabidopsis thaliana (Mouse-ear cress)).